Reading from the N-terminus, the 280-residue chain is MVVKVGVAKLGNIAAGVMAELLLDERADREDMMTFMATSGTKLQKEDVDRVVSNLKAWQPDFAIVVSPNGVLEGPVGAREDLKAAGIPTIVITDDVTTKKEGWEALKASGFGYIIVKADAMIGARREFLDPVEMADYNGNLVKVLALTGAFRKLQLELDKVIDQVKAGKKGAELELPKLVLNSDNSTKGEFTNPYALAKARAAYEIAQAVAGVNVKGCFMTKEWTDYVPIVASAHEMMRAAANLCDQARELEKGCDGVIRKPHKKTGEIVSKVALISKPE.

Belongs to the MTD family.

The catalysed reaction is 5,10-methylenetetrahydromethanopterin + oxidized coenzyme F420-(gamma-L-Glu)(n) + 2 H(+) = 5,10-methenyl-5,6,7,8-tetrahydromethanopterin + reduced coenzyme F420-(gamma-L-Glu)(n). The protein operates within one-carbon metabolism; methanogenesis from CO(2); 5,10-methylene-5,6,7,8-tetrahydromethanopterin from 5,10-methenyl-5,6,7,8-tetrahydromethanopterin (coenzyme F420 route): step 1/1. Catalyzes the reversible reduction of methenyl-H(4)MPT(+) to methylene-H(4)MPT. The polypeptide is F420-dependent methylenetetrahydromethanopterin dehydrogenase (Methanocorpusculum labreanum (strain ATCC 43576 / DSM 4855 / Z)).